Consider the following 387-residue polypeptide: Succinate--CoA ligase [ADP-forming] subunit beta (387 aa).

ATP is bound by residues Lys-46, 53–55 (GRG), Glu-99, Ala-102, and Glu-107. Residues Asn-199 and Asp-213 each coordinate Mg(2+). Substrate is bound by residues Asn-264 and 321-323 (GIV).

The protein belongs to the succinate/malate CoA ligase beta subunit family. As to quaternary structure, heterotetramer of two alpha and two beta subunits. Requires Mg(2+) as cofactor.

It carries out the reaction succinate + ATP + CoA = succinyl-CoA + ADP + phosphate. The enzyme catalyses GTP + succinate + CoA = succinyl-CoA + GDP + phosphate. The protein operates within carbohydrate metabolism; tricarboxylic acid cycle; succinate from succinyl-CoA (ligase route): step 1/1. Functionally, succinyl-CoA synthetase functions in the citric acid cycle (TCA), coupling the hydrolysis of succinyl-CoA to the synthesis of either ATP or GTP and thus represents the only step of substrate-level phosphorylation in the TCA. The beta subunit provides nucleotide specificity of the enzyme and binds the substrate succinate, while the binding sites for coenzyme A and phosphate are found in the alpha subunit. This Campylobacter jejuni subsp. jejuni serotype O:23/36 (strain 81-176) protein is Succinate--CoA ligase [ADP-forming] subunit beta.